We begin with the raw amino-acid sequence, 959 residues long: Isoleucine--tRNA ligase (959 aa).

The short motif at 60 to 70 (PYANGSLHMGH) is the 'HIGH' region element. Glu569 serves as a coordination point for L-isoleucyl-5'-AMP. The short motif at 610 to 614 (KMSKS) is the 'KMSKS' region element. Lys613 contributes to the ATP binding site. Residues Cys928, Cys931, Cys948, and Cys951 each contribute to the Zn(2+) site.

Belongs to the class-I aminoacyl-tRNA synthetase family. IleS type 1 subfamily. In terms of assembly, monomer. It depends on Zn(2+) as a cofactor.

The protein localises to the cytoplasm. It catalyses the reaction tRNA(Ile) + L-isoleucine + ATP = L-isoleucyl-tRNA(Ile) + AMP + diphosphate. In terms of biological role, catalyzes the attachment of isoleucine to tRNA(Ile). As IleRS can inadvertently accommodate and process structurally similar amino acids such as valine, to avoid such errors it has two additional distinct tRNA(Ile)-dependent editing activities. One activity is designated as 'pretransfer' editing and involves the hydrolysis of activated Val-AMP. The other activity is designated 'posttransfer' editing and involves deacylation of mischarged Val-tRNA(Ile). The polypeptide is Isoleucine--tRNA ligase (Rippkaea orientalis (strain PCC 8801 / RF-1) (Cyanothece sp. (strain PCC 8801))).